Reading from the N-terminus, the 1070-residue chain is Carbamoyl phosphate synthase large chain (1070 aa).

Residues 1–401 (MPKRDDIKTI…ALLKAVRSLE (401 aa)) form a carboxyphosphate synthetic domain region. ATP is bound by residues R129, R169, G175, G176, K208, I210, E215, G241, I242, H243, Q284, and E298. The ATP-grasp 1 domain occupies 133–327 (RDLMNELGEP…IAKLAAKIAV (195 aa)). Mg(2+) is bound by residues Q284, E298, and N300. Q284, E298, and N300 together coordinate Mn(2+). Positions 402 to 546 (IGADHLLLEE…YSTYEDENES (145 aa)) are oligomerization domain. Residues 547-929 (IRSSKESVIV…ALYKGFVASG (383 aa)) are carbamoyl phosphate synthetic domain. The ATP-grasp 2 domain occupies 671–861 (EKALEILQIP…MANVATRVIL (191 aa)). Residues R707, R746, V748, E752, G777, V778, H779, S780, Q820, and E832 each coordinate ATP. Q820, E832, and N834 together coordinate Mg(2+). Mn(2+)-binding residues include Q820, E832, and N834. Residues 930–1070 (TTMHDYGTVL…SEVKQPKARV (141 aa)) form the MGS-like domain. Residues 930-1070 (TTMHDYGTVL…SEVKQPKARV (141 aa)) are allosteric domain.

The protein belongs to the CarB family. As to quaternary structure, composed of two chains; the small (or glutamine) chain promotes the hydrolysis of glutamine to ammonia, which is used by the large (or ammonia) chain to synthesize carbamoyl phosphate. Tetramer of heterodimers (alpha,beta)4. Requires Mg(2+) as cofactor. It depends on Mn(2+) as a cofactor.

It carries out the reaction hydrogencarbonate + L-glutamine + 2 ATP + H2O = carbamoyl phosphate + L-glutamate + 2 ADP + phosphate + 2 H(+). It catalyses the reaction hydrogencarbonate + NH4(+) + 2 ATP = carbamoyl phosphate + 2 ADP + phosphate + 2 H(+). It participates in amino-acid biosynthesis; L-arginine biosynthesis; carbamoyl phosphate from bicarbonate: step 1/1. Its pathway is pyrimidine metabolism; UMP biosynthesis via de novo pathway; (S)-dihydroorotate from bicarbonate: step 1/3. In terms of biological role, large subunit of the glutamine-dependent carbamoyl phosphate synthetase (CPSase). CPSase catalyzes the formation of carbamoyl phosphate from the ammonia moiety of glutamine, carbonate, and phosphate donated by ATP, constituting the first step of 2 biosynthetic pathways, one leading to arginine and/or urea and the other to pyrimidine nucleotides. The large subunit (synthetase) binds the substrates ammonia (free or transferred from glutamine from the small subunit), hydrogencarbonate and ATP and carries out an ATP-coupled ligase reaction, activating hydrogencarbonate by forming carboxy phosphate which reacts with ammonia to form carbamoyl phosphate. The sequence is that of Carbamoyl phosphate synthase large chain from Listeria innocua serovar 6a (strain ATCC BAA-680 / CLIP 11262).